Consider the following 490-residue polypeptide: Protein U94 (490 aa).

In terms of domain architecture, PV NS1-Nuc spans Met1 to Lys210. One can recognise an SF3 helicase domain in the interval Asp312 to Lys463. Gly338–Ser345 provides a ligand contact to ATP.

It is found in the host nucleus. This Human herpesvirus 6B (HHV-6 variant B) protein is Protein U94 (U94).